The following is a 213-amino-acid chain: Imidazole glycerol phosphate synthase subunit HisH (213 aa).

The region spanning 4–211 (NIGLIDYGMG…LAWLKKETKD (208 aa)) is the Glutamine amidotransferase type-1 domain. Cys-82 acts as the Nucleophile in catalysis. Residues His-186 and Glu-188 contribute to the active site.

Heterodimer of HisH and HisF.

The protein resides in the cytoplasm. The enzyme catalyses 5-[(5-phospho-1-deoxy-D-ribulos-1-ylimino)methylamino]-1-(5-phospho-beta-D-ribosyl)imidazole-4-carboxamide + L-glutamine = D-erythro-1-(imidazol-4-yl)glycerol 3-phosphate + 5-amino-1-(5-phospho-beta-D-ribosyl)imidazole-4-carboxamide + L-glutamate + H(+). The catalysed reaction is L-glutamine + H2O = L-glutamate + NH4(+). It participates in amino-acid biosynthesis; L-histidine biosynthesis; L-histidine from 5-phospho-alpha-D-ribose 1-diphosphate: step 5/9. In terms of biological role, IGPS catalyzes the conversion of PRFAR and glutamine to IGP, AICAR and glutamate. The HisH subunit catalyzes the hydrolysis of glutamine to glutamate and ammonia as part of the synthesis of IGP and AICAR. The resulting ammonia molecule is channeled to the active site of HisF. This Prochlorococcus marinus (strain SARG / CCMP1375 / SS120) protein is Imidazole glycerol phosphate synthase subunit HisH.